The sequence spans 478 residues: MAGVEQAASFGGHLNGDLDPDDREEGTSSTAEEAAKKKRRKKKKGKGAVSAVQQELDKESGALVDEVAKQLESQALEEKERDDDDEDGDGDADGATGKKKKKKKKKRGPKVQTDPPSVPICDLYPNGVFPKGQECEYPPTQDGRTAAWRTTSEEKKALDQASEEIWNDFREAAEAHRQVRKYVMSWIKPGMTMIEICEKLEDCSRKLIKENGLNAGLAFPTGCSLNNCAAHYTPNAGDTTVLQYDDICKIDFGTHISGRIIDCAFTVTFNPKYDILLTAVKDATNTGIKCAGIDVRLCDVGEAIQEVMESYEVEIDGKTYQVKPIRNLNGHSIGPYRIHAGKTVPIVKGGEATRMEEGEVYAIETFGSTGKGVVHDDMECSHYMKNFDVGHVPIRLPRTKHLLNVINENFGTLAFCRRWLDRLGESKYLMALKNLCDLGIVDPYPPLCDIKGSYTAQFEHTILLRPTCKEVVSRGDDY.

Residues 1–122 (MAGVEQAASF…TDPPSVPICD (122 aa)) form a disordered region. N-acetylalanine is present on Ala2. Over residues 36–46 (KKKRRKKKKGK) the composition is skewed to basic residues. Phosphoserine; alternate is present on Ser60. Ser60 carries O-linked (GlcNAc) serine; alternate glycosylation. Over residues 80–92 (ERDDDDEDGDGDA) the composition is skewed to acidic residues. Over residues 97–109 (GKKKKKKKKKRGP) the composition is skewed to basic residues. His231 is a binding site for substrate. A divalent metal cation-binding residues include Asp251, Asp262, and His331. His339 provides a ligand contact to substrate. A divalent metal cation is bound by residues Glu364 and Glu459.

It belongs to the peptidase M24A family. Methionine aminopeptidase eukaryotic type 2 subfamily. As to quaternary structure, binds EIF2S1 at low magnesium concentrations. Interacts strongly with the eIF-2 gamma-subunit EIF2S3. Co(2+) serves as cofactor. Requires Zn(2+) as cofactor. It depends on Mn(2+) as a cofactor. The cofactor is Fe(2+). Post-translationally, contains approximately 12 O-linked N-acetylglucosamine (GlcNAc) residues. O-glycosylation is required for EIF2S1 binding.

The protein localises to the cytoplasm. The catalysed reaction is Release of N-terminal amino acids, preferentially methionine, from peptides and arylamides.. Functionally, cotranslationally removes the N-terminal methionine from nascent proteins. The N-terminal methionine is often cleaved when the second residue in the primary sequence is small and uncharged (Met-Ala-, Cys, Gly, Pro, Ser, Thr, or Val). Its function is as follows. Protects eukaryotic initiation factor EIF2S1 from translation-inhibiting phosphorylation by inhibitory kinases such as EIF2AK2/PKR and EIF2AK1/HCR. Plays a critical role in the regulation of protein synthesis. In Mus musculus (Mouse), this protein is Methionine aminopeptidase 2 (Metap2).